A 550-amino-acid chain; its full sequence is O-phosphoserine--tRNA(Cys) ligase (550 aa).

The tract at residues 1 to 32 is disordered; sequence MRFNPQDWKEKSHTNFEGAWHDGPSVITPPGE. Residues 212–214, 257–259, 299–300, and asparagine 342 each bind substrate; these read HMT, SAS, and YY.

It belongs to the class-II aminoacyl-tRNA synthetase family. O-phosphoseryl-tRNA(Cys) synthetase subfamily. Homotetramer. Interacts with SepCysS.

It catalyses the reaction tRNA(Cys) + O-phospho-L-serine + ATP = O-phospho-L-seryl-tRNA(Cys) + AMP + diphosphate. Catalyzes the attachment of O-phosphoserine (Sep) to tRNA(Cys). This chain is O-phosphoserine--tRNA(Cys) ligase, found in Methanoregula boonei (strain DSM 21154 / JCM 14090 / 6A8).